The chain runs to 70 residues: Large ribosomal subunit protein eL38 (70 aa).

This sequence belongs to the eukaryotic ribosomal protein eL38 family.

In Aedes aegypti (Yellowfever mosquito), this protein is Large ribosomal subunit protein eL38 (RpL38).